The sequence spans 91 residues: UPF0250 protein mma_3250 (91 aa).

Belongs to the UPF0250 family.

This is UPF0250 protein mma_3250 from Janthinobacterium sp. (strain Marseille) (Minibacterium massiliensis).